Reading from the N-terminus, the 440-residue chain is tRNA(Ile)-lysidine synthase (440 aa).

31 to 36 (SGGADS) serves as a coordination point for ATP.

The protein belongs to the tRNA(Ile)-lysidine synthase family.

It localises to the cytoplasm. The catalysed reaction is cytidine(34) in tRNA(Ile2) + L-lysine + ATP = lysidine(34) in tRNA(Ile2) + AMP + diphosphate + H(+). Its function is as follows. Ligates lysine onto the cytidine present at position 34 of the AUA codon-specific tRNA(Ile) that contains the anticodon CAU, in an ATP-dependent manner. Cytidine is converted to lysidine, thus changing the amino acid specificity of the tRNA from methionine to isoleucine. This Borrelia garinii subsp. bavariensis (strain ATCC BAA-2496 / DSM 23469 / PBi) (Borreliella bavariensis) protein is tRNA(Ile)-lysidine synthase.